Here is a 922-residue protein sequence, read N- to C-terminus: TBC1 domain family member 2A (922 aa).

A disordered region spans residues 1–37 (MEDAPERTPSSSESTQPPGLAREPEVVSPGDSEGCAR). Positions 1–168 (MEDAPERTPS…AENGPTLHLK (168 aa)) are interaction with CADH1. The span at 8-17 (TPSSSESTQP) shows a compositional bias: polar residues. One can recognise a PH domain in the interval 43-141 (PKKLCGYLSK…WLQQLQMKRW (99 aa)). Residues 228–297 (NKQAQAAAHG…KRQSNTFPFF (70 aa)) are disordered. Residues 262-271 (LPEKEPEDPA) show a composition bias toward basic and acidic residues. The span at 275–295 (PRSSVPSGPTQKPKRQSNTFP) shows a compositional bias: polar residues. An interaction with RAC1 region spans residues 298–435 (SDGLARSRTA…QKLTEDLAQP (138 aa)). Coiled coils occupy residues 302 to 333 (ARSRTAQEKVAALEQQVLMLTKELKSQKELVI), 362 to 417 (LELV…NHAK), and 443 to 476 (FLSQQERMEHLKDDMEAYRTQNRFLNSEIHQVTK). A Rab-GAP TBC domain is found at 619-811 (GVPREHRPRV…RVWDAFLYEG (193 aa)). Residues 869–904 (MKQLRQLRAAHRERLEAELRELELLKVEYLQRRASL) are a coiled coil. Serine 914 carries the post-translational modification Phosphoserine.

Interacts with activated RAC1 and CDH1.

The protein resides in the cytoplasm. The protein localises to the cytoplasmic vesicle. It localises to the cell junction. Functionally, acts as a GTPase-activating protein for RAB7A. Signal effector acting as a linker between RAC1 and RAB7A, leading to RAB7A inactivation and subsequent inhibition of cadherin degradation and reduced cell-cell adhesion. The sequence is that of TBC1 domain family member 2A (Tbc1d2) from Mus musculus (Mouse).